Here is a 440-residue protein sequence, read N- to C-terminus: MRLHFLPLVALCATTASSLAFDSSTSQPPGAQVYSVNDAAGLKRIGAHHPKYHDRRTVTIRSSHNDTDDVSADFLWGIRRANHGGRLLLKKGQKYVIGRKLDLSFLDNVEVQLDGELKFTDDVPYWQENNFYYDFQKSISFWRWGGHDVRIFGRGTLNGNGQRWYNEFAGQEILDPDNTYYRPILFVAENATRLSVEGITELNSPCWTNFLVNSKDISFDNVFINAYSTNASAEPKNTDGFDSLNVNGLSVTNTRVDIGDDCFSPKPNTTNIFVQNLWCNNTHGVSMGSIGQYPGVLDIIEHAYIENVTLLNGENGARLKAWAGEDVGYGRINNITYKNIHVENTDYPIVLDQCYFNIPADECASYPSQVNVTNIVFENVYGTSSGAEGNVVAELICSPNAICEDIKLKGINLTTPEGEKGVVVCDGISGGVGVECQSSE.

An N-terminal signal peptide occupies residues 1 to 20 (MRLHFLPLVALCATTASSLA). 3 N-linked (GlcNAc...) asparagine glycosylation sites follow: Asn-65, Asn-190, and Asn-230. Catalysis depends on Asp-260, which acts as the Proton donor. Cys-262 and Cys-279 are oxidised to a cystine. Asn-268 and Asn-280 each carry an N-linked (GlcNAc...) asparagine glycan. His-283 is an active-site residue. Asn-307, Asn-334, and Asn-371 each carry an N-linked (GlcNAc...) asparagine glycan. Cys-397 and Cys-403 form a disulfide bridge. An N-linked (GlcNAc...) asparagine glycan is attached at Asn-412.

Belongs to the glycosyl hydrolase 28 family.

The protein localises to the secreted. The catalysed reaction is [(1-&gt;4)-alpha-D-galacturonosyl](n) + H2O = alpha-D-galacturonate + [(1-&gt;4)-alpha-D-galacturonosyl](n-1). Functionally, specific in hydrolyzing the terminal glycosidic bond of polygalacturonic acid and oligogalacturonates. In Emericella nidulans (strain FGSC A4 / ATCC 38163 / CBS 112.46 / NRRL 194 / M139) (Aspergillus nidulans), this protein is Probable exopolygalacturonase B (pgxB).